A 76-amino-acid polypeptide reads, in one-letter code: UPF0154 protein Sca_0984 (76 aa).

Residues tryptophan 4–leucine 24 form a helical membrane-spanning segment.

Belongs to the UPF0154 family.

The protein localises to the cell membrane. This is UPF0154 protein Sca_0984 from Staphylococcus carnosus (strain TM300).